Consider the following 550-residue polypeptide: Coiled-coil domain-containing protein 60 (550 aa).

The interval 1–21 is disordered; that stretch reads MTKVPATKKLQSSPNSGAVRP. Residues 71-98 are a coiled coil; that stretch reads AILREETAKKKKQQQLQKLKEEERNKFQ. 2 disordered regions span residues 219–293 and 336–367; these read KFKI…EPLY and AYKEMQTTLKSSERSSSTSAESHIQPVQKKSK. The segment covering 235 to 256 has biased composition (low complexity); that stretch reads RGSTLSLSRASGGSSPQSSMIS. Residues 336 to 345 show a composition bias toward polar residues; it reads AYKEMQTTLK.

The chain is Coiled-coil domain-containing protein 60 (CCDC60) from Homo sapiens (Human).